Here is a 424-residue protein sequence, read N- to C-terminus: Hemagglutinin-esterase (424 aa).

A signal peptide spans 1-16 (MFLLPRFCLVCSIIST). Residues 7 to 127 (FCLVCSIIST…NNDIWMQNKG (121 aa)) are esterase domain 1. Residues 17 to 392 (FGFQNPPTNV…PICVYDPLPI (376 aa)) lie on the Virion surface side of the membrane. S40 serves as the catalytic Nucleophile. Cysteines 44 and 65 form a disulfide. 5 N-linked (GlcNAc...) asparagine; by host glycosylation sites follow: N54, N89, N153, N236, and N301. Disulfide bonds link C113-C162, C197-C276, and C205-C249. Residues 128 to 266 (LFYTQVYKKM…GNYLAISNEL (139 aa)) form a receptor binding region. The tract at residues 267–379 (LLTVPTKAIC…NCPTAASIIS (113 aa)) is esterase domain 2. Cysteines 307 and 312 form a disulfide. N316 carries an N-linked (GlcNAc...) asparagine; by host glycan. Catalysis depends on charge relay system residues D326 and H329. A disulfide bridge links C347 with C371. N358 carries an N-linked (GlcNAc...) asparagine; by host glycan. The chain crosses the membrane as a helical span at residues 393-413 (ILLGILLGVAVIVIVVLLLYF). At 414–424 (MVDNGIRQHYA) the chain is on the intravirion side.

This sequence belongs to the influenza type C/coronaviruses hemagglutinin-esterase family. As to quaternary structure, homodimer; disulfide-linked. Forms a complex with the M protein in the pre-Golgi. Associates then with S-M complex to form a ternary complex S-M-HE. Post-translationally, N-glycosylated in the host RER.

It is found in the virion membrane. It localises to the host cell membrane. The catalysed reaction is N-acetyl-9-O-acetylneuraminate + H2O = N-acetylneuraminate + acetate + H(+). It carries out the reaction N-acetyl-4-O-acetylneuraminate + H2O = N-acetylneuraminate + acetate + H(+). Functionally, structural protein that makes short spikes at the surface of the virus. Contains receptor binding and receptor-destroying activities. Mediates de-O-acetylation of N-acetyl-4-O-acetylneuraminic acid, which is probably the receptor determinant recognized by the virus on the surface of erythrocytes and susceptible cells. This receptor-destroying activity is important for virus release as it probably helps preventing self-aggregation and ensures the efficient spread of the progeny virus from cell to cell. May serve as a secondary viral attachment protein for initiating infection, the spike protein being the major one. May become a target for both the humoral and the cellular branches of the immune system. The polypeptide is Hemagglutinin-esterase (Sus scrofa (Pig)).